The primary structure comprises 128 residues: Protein yippee-like At3g08990 (128 aa).

One can recognise a Yippee domain in the interval 12–109; it reads LVYSCKYCQT…LERFKVLGPY (98 aa). Zn(2+)-binding residues include cysteine 16, cysteine 19, cysteine 72, and cysteine 75.

This sequence belongs to the yippee family.

This chain is Protein yippee-like At3g08990, found in Arabidopsis thaliana (Mouse-ear cress).